The chain runs to 267 residues: 5'-nucleotidase SurE (267 aa).

A divalent metal cation is bound by residues Asp-9, Asp-10, Ser-40, and Asn-97.

Belongs to the SurE nucleotidase family. A divalent metal cation serves as cofactor.

It is found in the cytoplasm. It carries out the reaction a ribonucleoside 5'-phosphate + H2O = a ribonucleoside + phosphate. Functionally, nucleotidase that shows phosphatase activity on nucleoside 5'-monophosphates. The chain is 5'-nucleotidase SurE from Helicobacter pylori (strain Shi470).